The following is a 1249-amino-acid chain: Myosin-1 (1249 aa).

Residues 1–40 (MGHSRRPAGGEKKSRFGRSKAAADVGDGRQAGGKPQVRKA) are disordered. The 680-residue stretch at 50-729 (IGVSDLTLLS…TLFALEAMRD (680 aa)) folds into the Myosin motor domain. An ATP-binding site is contributed by 143–150 (GESGAGKT). The residue at position 371 (S371) is a Phosphoserine. The interval 418–500 (SIGILDIYGF…PGVFAALNDA (83 aa)) is actin-binding. IQ domains follow at residues 733-753 (HNMA…RTEC) and 754-779 (AIRI…QGHT). Residues 787-979 (RRRMSILGSR…PGEPPNSVSK (193 aa)) form the TH1 domain. 2 disordered regions span residues 959 to 1081 (DSYK…KAKA) and 1127 to 1249 (EAYL…DDDW). Composition is skewed to low complexity over residues 1026–1035 (PQTAAAQPTP) and 1043–1061 (PVAA…ASAR). The segment covering 1062–1073 (APPPPPPAPPAA) has biased composition (pro residues). The region spanning 1074-1135 (AGPKKAKALY…PEAYLEEQVA (62 aa)) is the SH3 domain. The segment covering 1137-1149 (TPKPAPPPPPPVA) has biased composition (pro residues). Over residues 1150-1170 (PRASPAPVNGSAAVAAAKAKA) the composition is skewed to low complexity. The segment covering 1199-1221 (VSMNSQGDSSGASGRGTPSSVSN) has biased composition (polar residues). Low complexity predominate over residues 1222–1235 (ASLAGGLAEALRAR).

The protein belongs to the TRAFAC class myosin-kinesin ATPase superfamily. Myosin family. In terms of assembly, interacts (via IQ domains) with camA. Post-translationally, phosphorylation of the TEDS site (Ser-371) is required for the polarization of the actin cytoskeleton. Phosphorylation probably activates the myosin-I ATPase activity.

The protein localises to the cytoplasm. It is found in the cytoskeleton. The protein resides in the actin patch. Functionally, type-I myosin implicated in the organization of the actin cytoskeleton. Required for proper actin cytoskeleton polarization. At the cell cortex, assembles in patch-like structures together with proteins from the actin-polymerizing machinery and promotes actin assembly. Functions as actin nucleation-promoting factor (NPF) for the Arp2/3 complex. Plays an important role in polarized growth, spore germination, hyphal morphogenesis, and septal wall formation. In Emericella nidulans (strain FGSC A4 / ATCC 38163 / CBS 112.46 / NRRL 194 / M139) (Aspergillus nidulans), this protein is Myosin-1 (myoA).